The sequence spans 347 residues: RNA 3'-terminal phosphate cyclase (347 aa).

ATP contacts are provided by residues Gln101 and 286–289; that span reads HMAD. Residue His312 is the Tele-AMP-histidine intermediate of the active site.

It belongs to the RNA 3'-terminal cyclase family. Type 1 subfamily.

Its subcellular location is the cytoplasm. It carries out the reaction a 3'-end 3'-phospho-ribonucleotide-RNA + ATP = a 3'-end 2',3'-cyclophospho-ribonucleotide-RNA + AMP + diphosphate. Functionally, catalyzes the conversion of 3'-phosphate to a 2',3'-cyclic phosphodiester at the end of RNA. The mechanism of action of the enzyme occurs in 3 steps: (A) adenylation of the enzyme by ATP; (B) transfer of adenylate to an RNA-N3'P to produce RNA-N3'PP5'A; (C) and attack of the adjacent 2'-hydroxyl on the 3'-phosphorus in the diester linkage to produce the cyclic end product. The biological role of this enzyme is unknown but it is likely to function in some aspects of cellular RNA processing. The protein is RNA 3'-terminal phosphate cyclase of Pyrobaculum neutrophilum (strain DSM 2338 / JCM 9278 / NBRC 100436 / V24Sta) (Thermoproteus neutrophilus).